Consider the following 111-residue polypeptide: Protein GLUTAMINE DUMPER 6 (111 aa).

Topologically, residues 1–16 (MRPTPKVEIWKSPVPY) are extracellular. A helical transmembrane segment spans residues 17–37 (LFGGLFLLVLLIALALLSLVC). Topologically, residues 38–111 (THQKPSSSSN…NCDNVTVIST (74 aa)) are cytoplasmic. Positions 40–49 (QKPSSSSNNN) are enriched in polar residues. The disordered stretch occupies residues 40 to 63 (QKPSSSSNNNHMDEEDDVGDKDAK). The VIMAG; degenerate signature appears at 75-79 (VILAG).

It belongs to the GLUTAMINE DUMPER 1 (TC 9.B.60) family. As to expression, expressed in the vascular tissues.

The protein localises to the membrane. Functionally, probable subunit of an amino acid transporter involved in the regulation of the amino acid metabolism. Stimulates amino acid export by activating nonselective amino acid facilitators. The sequence is that of Protein GLUTAMINE DUMPER 6 (GDU6) from Arabidopsis thaliana (Mouse-ear cress).